Here is a 581-residue protein sequence, read N- to C-terminus: 2-isopropylmalate synthase (581 aa).

The region spanning 32-306 is the Pyruvate carboxyltransferase domain; sequence PQWCAVDLRD…DPQLDFSDIK (275 aa). 4 residues coordinate Mg(2+): Asp41, His245, His247, and Asn281. The interval 455–581 is regulatory domain; it reads RSAPVEQIAL…KHQQLQNGGV (127 aa).

Belongs to the alpha-IPM synthase/homocitrate synthase family. LeuA type 2 subfamily. Homodimer. Mg(2+) serves as cofactor.

The protein localises to the cytoplasm. The catalysed reaction is 3-methyl-2-oxobutanoate + acetyl-CoA + H2O = (2S)-2-isopropylmalate + CoA + H(+). It functions in the pathway amino-acid biosynthesis; L-leucine biosynthesis; L-leucine from 3-methyl-2-oxobutanoate: step 1/4. Functionally, catalyzes the condensation of the acetyl group of acetyl-CoA with 3-methyl-2-oxobutanoate (2-ketoisovalerate) to form 3-carboxy-3-hydroxy-4-methylpentanoate (2-isopropylmalate). The sequence is that of 2-isopropylmalate synthase from Corynebacterium efficiens (strain DSM 44549 / YS-314 / AJ 12310 / JCM 11189 / NBRC 100395).